A 273-amino-acid polypeptide reads, in one-letter code: 2-dehydro-3-deoxyphosphooctonate aldolase (273 aa).

The protein belongs to the KdsA family.

The protein resides in the cytoplasm. It catalyses the reaction D-arabinose 5-phosphate + phosphoenolpyruvate + H2O = 3-deoxy-alpha-D-manno-2-octulosonate-8-phosphate + phosphate. It participates in carbohydrate biosynthesis; 3-deoxy-D-manno-octulosonate biosynthesis; 3-deoxy-D-manno-octulosonate from D-ribulose 5-phosphate: step 2/3. It functions in the pathway bacterial outer membrane biogenesis; lipopolysaccharide biosynthesis. This chain is 2-dehydro-3-deoxyphosphooctonate aldolase, found in Cyanothece sp. (strain PCC 7425 / ATCC 29141).